The following is a 198-amino-acid chain: Small ribosomal subunit protein uS4 (198 aa).

The 66-residue stretch at 88 to 153 (LRLDNVMFRM…AQRYKDILEV (66 aa)) folds into the S4 RNA-binding domain.

It belongs to the universal ribosomal protein uS4 family. In terms of assembly, part of the 30S ribosomal subunit. Contacts protein S5. The interaction surface between S4 and S5 is involved in control of translational fidelity.

Its function is as follows. One of the primary rRNA binding proteins, it binds directly to 16S rRNA where it nucleates assembly of the body of the 30S subunit. In terms of biological role, with S5 and S12 plays an important role in translational accuracy. The protein is Small ribosomal subunit protein uS4 of Lachnoclostridium phytofermentans (strain ATCC 700394 / DSM 18823 / ISDg) (Clostridium phytofermentans).